The primary structure comprises 316 residues: Type II restriction enzyme BsuBI (316 aa).

This sequence belongs to the BsuBI/PstI type II restriction endonuclease family. In terms of assembly, homodimer. Mg(2+) serves as cofactor.

The enzyme catalyses Endonucleolytic cleavage of DNA to give specific double-stranded fragments with terminal 5'-phosphates.. Functionally, a P subtype restriction enzyme that recognizes the double-stranded sequence 5'-CTGCAG-3' and cleaves after A-5. The sequence is that of Type II restriction enzyme BsuBI (hsdBR) from Bacillus subtilis.